The primary structure comprises 280 residues: Urease accessory protein UreD (280 aa).

Belongs to the UreD family. UreD, UreF and UreG form a complex that acts as a GTP-hydrolysis-dependent molecular chaperone, activating the urease apoprotein by helping to assemble the nickel containing metallocenter of UreC. The UreE protein probably delivers the nickel.

The protein resides in the cytoplasm. In terms of biological role, required for maturation of urease via the functional incorporation of the urease nickel metallocenter. The protein is Urease accessory protein UreD of Vibrio parahaemolyticus.